A 165-amino-acid polypeptide reads, in one-letter code: Protein eva-1 homolog B (165 aa).

The helical transmembrane segment at 29 to 49 (GLYFVLGVCFGLLLTLCLLVI) threads the bilayer. Disordered regions lie at residues 57-109 (PRPR…GPLN) and 143-165 (LLGT…MHYY). Residues 74–84 (EPEDDDEDEED) are compositionally biased toward acidic residues. 3 positions are modified to phosphothreonine: Thr-85, Thr-148, and Thr-158.

The protein belongs to the EVA1 family.

The protein resides in the membrane. In Homo sapiens (Human), this protein is Protein eva-1 homolog B (EVA1B).